Here is a 1198-residue protein sequence, read N- to C-terminus: DNA polymerase II large subunit (1198 aa).

Disordered stretches follow at residues 281 to 332 and 534 to 553; these read YKTG…PQKK and HWAE…AAES. The segment covering 286-319 has biased composition (acidic residues); the sequence is DTDEADADSDDGTDEDAADDSDIDDSSAGDEEAD.

It belongs to the archaeal DNA polymerase II family. Heterodimer of a large subunit and a small subunit.

It catalyses the reaction DNA(n) + a 2'-deoxyribonucleoside 5'-triphosphate = DNA(n+1) + diphosphate. It carries out the reaction Exonucleolytic cleavage in the 3'- to 5'-direction to yield nucleoside 5'-phosphates.. In terms of biological role, possesses two activities: a DNA synthesis (polymerase) and an exonucleolytic activity that degrades single-stranded DNA in the 3'- to 5'-direction. Has a template-primer preference which is characteristic of a replicative DNA polymerase. This Natronomonas pharaonis (strain ATCC 35678 / DSM 2160 / CIP 103997 / JCM 8858 / NBRC 14720 / NCIMB 2260 / Gabara) (Halobacterium pharaonis) protein is DNA polymerase II large subunit.